The sequence spans 202 residues: ATP-dependent Clp protease proteolytic subunit (202 aa).

Ser-98 (nucleophile) is an active-site residue. His-123 is an active-site residue.

The protein belongs to the peptidase S14 family. In terms of assembly, fourteen ClpP subunits assemble into 2 heptameric rings which stack back to back to give a disk-like structure with a central cavity, resembling the structure of eukaryotic proteasomes.

It is found in the cytoplasm. The catalysed reaction is Hydrolysis of proteins to small peptides in the presence of ATP and magnesium. alpha-casein is the usual test substrate. In the absence of ATP, only oligopeptides shorter than five residues are hydrolyzed (such as succinyl-Leu-Tyr-|-NHMec, and Leu-Tyr-Leu-|-Tyr-Trp, in which cleavage of the -Tyr-|-Leu- and -Tyr-|-Trp bonds also occurs).. In terms of biological role, cleaves peptides in various proteins in a process that requires ATP hydrolysis. Has a chymotrypsin-like activity. Plays a major role in the degradation of misfolded proteins. The chain is ATP-dependent Clp protease proteolytic subunit from Desulfovibrio desulfuricans (strain ATCC 27774 / DSM 6949 / MB).